The sequence spans 489 residues: Male-specific lethal 1-like 1 (489 aa).

Disordered regions lie at residues 126-164 (PMVSNDNNQQREGEQVGAMVGDSSPEDSPSGKHWNVRKG) and 224-311 (VKKD…EDMQ). Positions 179 to 227 (LLLQLELIEQQQKHLHNKNKEIEDLKAEKEMLMARIERMEHRLQMVKKD) form a coiled coil. In terms of domain architecture, PEHE spans 347–466 (TVEVPSWRES…LKQQDFDLPW (120 aa)). The interval 371–389 (ECLDDSVFLKRHSKLELDE) is interaction with KAT8 HAT domain. Residues 380–394 (KRHSKLELDEKRRKR) carry the Bipartite nuclear localization signal motif.

The protein belongs to the msl-1 family. Component of a multisubunit histone acetyltransferase complex (MSL). Interacts (via PEHE domain) with KAT8 (via HAT domain) and MSL3 (via MRG domain); both interactions are direct.

The protein localises to the nucleus. Its subcellular location is the nucleoplasm. It is found in the nucleus speckle. In terms of biological role, component of histone acetyltransferase complex. Within MSL complex, promotes ubiquitination of histone H2B. The sequence is that of Male-specific lethal 1-like 1 (msl1l1) from Danio rerio (Zebrafish).